The sequence spans 183 residues: Large ribosomal subunit protein eL18 (183 aa).

The interval 150 to 183 is disordered; that stretch reads RHFGPAPGAPRSHTKPYVRTKGHEKARPSRRANV.

The protein belongs to the eukaryotic ribosomal protein eL18 family.

Its subcellular location is the cytoplasm. The sequence is that of Large ribosomal subunit protein eL18 (RpL18) from Bombyx mori (Silk moth).